The chain runs to 66 residues: Phylloseptin-S2 (66 aa).

Residues 1 to 22 form the signal peptide; sequence MAFLKKSLFLVLFLGLVSLSIC. A propeptide spanning residues 23 to 46 is cleaved from the precursor; it reads EEEKRETEEEEHDQEEDDKSEEKR. The tract at residues 25–44 is disordered; the sequence is EKRETEEEEHDQEEDDKSEE. The segment covering 30–41 has biased composition (acidic residues); that stretch reads EEEEHDQEEDDK. Residue Phe-65 is modified to Phenylalanine amide.

Expressed by the skin glands.

The protein resides in the secreted. It localises to the target cell membrane. In terms of biological role, antimicrobial peptide with high activity against Gram-positive bacteria, moderate activity against Gram-negative bacteria, and moderate activity against fungi. Acts by causing bacterial membrane disruption inducing leakage of the intracellular content followed by cell death. It adopts an alpha-helical amphipathic structure in membrane environments. Also shows highly potent antiparasitic activity against Leishmania species. Shows moderate hemolytic activity on human erythrocytes (LC(50)=25 uM). Is also active on human monocytes (IC(50)=22.5 uM). This chain is Phylloseptin-S2, found in Phyllomedusa sauvagei (Sauvage's leaf frog).